The primary structure comprises 365 residues: Isopentenyl-diphosphate delta-isomerase (365 aa).

Residue 8–9 (RK) coordinates substrate. FMN contacts are provided by residues 67–69 (SIT), Ser97, and Asn126. 97–99 (SQR) provides a ligand contact to substrate. Gln160 contributes to the substrate binding site. Glu161 contacts Mg(2+). Residues Lys192, Thr222, 272 to 274 (GIR), and 293 to 294 (AL) each bind FMN.

The protein belongs to the IPP isomerase type 2 family. In terms of assembly, homooctamer. Dimer of tetramers. It depends on FMN as a cofactor. NADPH is required as a cofactor. The cofactor is Mg(2+).

Its subcellular location is the cytoplasm. The enzyme catalyses isopentenyl diphosphate = dimethylallyl diphosphate. Functionally, involved in the biosynthesis of isoprenoids. Catalyzes the 1,3-allylic rearrangement of the homoallylic substrate isopentenyl (IPP) to its allylic isomer, dimethylallyl diphosphate (DMAPP). This chain is Isopentenyl-diphosphate delta-isomerase, found in Methanosarcina mazei (strain ATCC BAA-159 / DSM 3647 / Goe1 / Go1 / JCM 11833 / OCM 88) (Methanosarcina frisia).